We begin with the raw amino-acid sequence, 41 residues long: Alpha-conotoxin TxIB (41 aa).

The propeptide occupies 1-20 (FDGRNTSANNKATDLMALPV). Disulfide bonds link cysteine 23/cysteine 29 and cysteine 24/cysteine 37. The tract at residues 25–27 (SDP) is ser-Xaa-Pro motif, crucial for potent interaction with nAChR. Cysteine amide; in Alpha-conotoxin TxIB is present on cysteine 37. A propeptide spanning residues 39-41 (GRR) is cleaved from the precursor.

Belongs to the conotoxin A superfamily. In terms of tissue distribution, expressed by the venom duct.

The protein localises to the secreted. In terms of biological role, alpha-conotoxins act on postsynaptic membranes, they bind to the nicotinic acetylcholine receptors (nAChR) and thus inhibit them. This conotoxin is a subtype-specific blocker of alpha-6/alpha-3-beta-2-beta-3 (CHRNA6/CHRNA3-CHRNB2-CHRNB3) nAChRs nicotinic acetylcholine receptors (nAChRs) (IC(50)=28.4 nM). This chain is Alpha-conotoxin TxIB, found in Conus textile (Cloth-of-gold cone).